The primary structure comprises 411 residues: Multidrug resistance protein MdtA (411 aa).

Residues 1-26 (MNNNKKTKKRFSLIIILLIVIAGAIA) form the signal peptide. A compositionally biased stretch (polar residues) spans 35–55 (SAPPVSKDTPTANTPNRSTAG). Positions 35–64 (SAPPVSKDTPTANTPNRSTAGSRRPPMPPV) are disordered.

The protein belongs to the membrane fusion protein (MFP) (TC 8.A.1) family. Part of a tripartite efflux system composed of MdtA, MdtB and MdtC.

The protein resides in the cell inner membrane. In Proteus mirabilis (strain HI4320), this protein is Multidrug resistance protein MdtA.